A 53-amino-acid chain; its full sequence is Rubredoxin 3 (53 aa).

In terms of domain architecture, Rubredoxin-like spans 1-53; it reads MQKWVCVPCGYEYDPADGDPENGIEPGTAFEDLPEDWVCPVCGVDKSFFEPVS. Fe cation-binding residues include cysteine 6, cysteine 9, cysteine 39, and cysteine 42.

Belongs to the rubredoxin family. Monomer. Fe(3+) is required as a cofactor.

Functions as an electron acceptor for pyruvate ferredoxin oxidoreductase (PFOR). The polypeptide is Rubredoxin 3 (rub3) (Chlorobaculum tepidum (strain ATCC 49652 / DSM 12025 / NBRC 103806 / TLS) (Chlorobium tepidum)).